The sequence spans 912 residues: uncharacterized protein (912 aa).

2 stretches are compositionally biased toward basic and acidic residues: residues 20 to 32 and 39 to 67; these read IERL…AEPA and HEYE…EDKT. Residues 20-91 are disordered; it reads IERLREQGRA…KPTLPQPETD (72 aa). Over residues 68–77 the composition is skewed to basic residues; that stretch reads RHKKLKHRSR.

This is an uncharacterized protein from Penicillium chrysogenum virus (isolate Caston/2003) (PcV).